Consider the following 361-residue polypeptide: GTPase Obg (361 aa).

The Obg domain maps to 1 to 159 (MKFVDEAFID…KNLKLELKVL (159 aa)). Residues 160-334 (ADVGLLGMPN…LIKTIYQHVK (175 aa)) form the OBG-type G domain. GTP contacts are provided by residues 166 to 173 (GMPNAGKS), 191 to 195 (FTTLH), 213 to 216 (DLPG), 284 to 287 (NKLD), and 315 to 317 (SAL). Mg(2+)-binding residues include S173 and T193. The disordered stretch occupies residues 339–361 (SEQPVEEVDPRFVPLPPESPETP). Residues 351-361 (VPLPPESPETP) show a composition bias toward pro residues.

Belongs to the TRAFAC class OBG-HflX-like GTPase superfamily. OBG GTPase family. In terms of assembly, monomer. Mg(2+) serves as cofactor.

The protein localises to the cytoplasm. An essential GTPase which binds GTP, GDP and possibly (p)ppGpp with moderate affinity, with high nucleotide exchange rates and a fairly low GTP hydrolysis rate. Plays a role in control of the cell cycle, stress response, ribosome biogenesis and in those bacteria that undergo differentiation, in morphogenesis control. This Polaromonas sp. (strain JS666 / ATCC BAA-500) protein is GTPase Obg.